The chain runs to 370 residues: tRNA-specific 2-thiouridylase MnmA (370 aa).

ATP contacts are provided by residues 6–13 (AMSGGVDS) and L32. The active-site Nucleophile is C101. A disulfide bridge links C101 with C193. ATP is bound at residue G125. Positions 143 to 145 (KDQ) are interaction with tRNA. C193 acts as the Cysteine persulfide intermediate in catalysis.

The protein belongs to the MnmA/TRMU family.

The protein localises to the cytoplasm. It catalyses the reaction S-sulfanyl-L-cysteinyl-[protein] + uridine(34) in tRNA + AH2 + ATP = 2-thiouridine(34) in tRNA + L-cysteinyl-[protein] + A + AMP + diphosphate + H(+). Catalyzes the 2-thiolation of uridine at the wobble position (U34) of tRNA, leading to the formation of s(2)U34. The sequence is that of tRNA-specific 2-thiouridylase MnmA from Rhodococcus erythropolis (strain PR4 / NBRC 100887).